The following is a 345-amino-acid chain: Uroporphyrinogen decarboxylase (345 aa).

Substrate-binding positions include 27–31 (RQAGR), Phe46, Asp76, Tyr152, Ser207, and His321.

The protein belongs to the uroporphyrinogen decarboxylase family. Homodimer.

It is found in the cytoplasm. It carries out the reaction uroporphyrinogen III + 4 H(+) = coproporphyrinogen III + 4 CO2. It participates in porphyrin-containing compound metabolism; protoporphyrin-IX biosynthesis; coproporphyrinogen-III from 5-aminolevulinate: step 4/4. In terms of biological role, catalyzes the decarboxylation of four acetate groups of uroporphyrinogen-III to yield coproporphyrinogen-III. In Staphylococcus aureus (strain Mu3 / ATCC 700698), this protein is Uroporphyrinogen decarboxylase.